The primary structure comprises 820 residues: TORTIFOLIA1-like protein 2 (820 aa).

5 HEAT repeats span residues 61 to 98, 102 to 139, 146 to 183, 187 to 224, and 228 to 265; these read DKVS…FHEG, PYLG…KMSC, GVFV…SSPE, AIIQ…AGGA, and SVLS…TGEK. Residues 304-321 are compositionally biased toward low complexity; it reads PGSDSPEPSETESSVKES. Disordered regions lie at residues 304–325, 357–377, and 584–644; these read PGSD…YNGA, PVSA…SNQD, and GSTI…GKTG. The span at 367–377 shows a compositional bias: basic and acidic residues; that stretch reads YNDDPRKSNQD. Positions 584 to 613 are enriched in polar residues; that stretch reads GSTISPRLSSCTSRTSTDIRNRQSTLSTSK.

The chain is TORTIFOLIA1-like protein 2 from Arabidopsis thaliana (Mouse-ear cress).